Reading from the N-terminus, the 465-residue chain is Ribulose bisphosphate carboxylase large chain (465 aa).

Position 4 is an N6,N6,N6-trimethyllysine (K4). Substrate contacts are provided by N113 and T163. The Proton acceptor role is filled by K165. A substrate-binding site is contributed by K167. Mg(2+) is bound by residues K191, D193, and E194. K191 bears the N6-carboxylysine mark. The Proton acceptor role is filled by H284. Substrate contacts are provided by R285, H317, and S369.

The protein belongs to the RuBisCO large chain family. Type I subfamily. As to quaternary structure, heterohexadecamer of 8 large chains and 8 small chains; disulfide-linked. The disulfide link is formed within the large subunit homodimers. It depends on Mg(2+) as a cofactor. The disulfide bond which can form in the large chain dimeric partners within the hexadecamer appears to be associated with oxidative stress and protein turnover.

It localises to the plastid. The protein localises to the chloroplast. The enzyme catalyses 2 (2R)-3-phosphoglycerate + 2 H(+) = D-ribulose 1,5-bisphosphate + CO2 + H2O. It catalyses the reaction D-ribulose 1,5-bisphosphate + O2 = 2-phosphoglycolate + (2R)-3-phosphoglycerate + 2 H(+). In terms of biological role, ruBisCO catalyzes two reactions: the carboxylation of D-ribulose 1,5-bisphosphate, the primary event in carbon dioxide fixation, as well as the oxidative fragmentation of the pentose substrate in the photorespiration process. Both reactions occur simultaneously and in competition at the same active site. The chain is Ribulose bisphosphate carboxylase large chain from Ephedra tweediana (Vining horsetail).